Here is a 213-residue protein sequence, read N- to C-terminus: Urease accessory protein UreG (213 aa).

17–24 (GPVGSGKT) provides a ligand contact to GTP.

This sequence belongs to the SIMIBI class G3E GTPase family. UreG subfamily. In terms of assembly, homodimer. UreD, UreF and UreG form a complex that acts as a GTP-hydrolysis-dependent molecular chaperone, activating the urease apoprotein by helping to assemble the nickel containing metallocenter of UreC. The UreE protein probably delivers the nickel.

It localises to the cytoplasm. Its function is as follows. Facilitates the functional incorporation of the urease nickel metallocenter. This process requires GTP hydrolysis, probably effectuated by UreG. In Delftia acidovorans (strain DSM 14801 / SPH-1), this protein is Urease accessory protein UreG.